The following is a 284-amino-acid chain: 2-dehydro-3-deoxyphosphooctonate aldolase (284 aa).

This sequence belongs to the KdsA family.

The protein localises to the cytoplasm. It carries out the reaction D-arabinose 5-phosphate + phosphoenolpyruvate + H2O = 3-deoxy-alpha-D-manno-2-octulosonate-8-phosphate + phosphate. It functions in the pathway carbohydrate biosynthesis; 3-deoxy-D-manno-octulosonate biosynthesis; 3-deoxy-D-manno-octulosonate from D-ribulose 5-phosphate: step 2/3. It participates in bacterial outer membrane biogenesis; lipopolysaccharide biosynthesis. This Aliivibrio salmonicida (strain LFI1238) (Vibrio salmonicida (strain LFI1238)) protein is 2-dehydro-3-deoxyphosphooctonate aldolase.